We begin with the raw amino-acid sequence, 156 residues long: Nucleosome assembly protein 1-like 5 (156 aa).

Residues 1–16 are compositionally biased toward basic and acidic residues; it reads MADPEKQGPAESRAED. Residues 1-58 form a disordered region; that stretch reads MADPEKQGPAESRAEDEVMEGAQGGEDAATGDSAAAPAAEEPQAPAENAPKPKKDFME. Low complexity predominate over residues 34 to 49; it reads AAAPAAEEPQAPAENA. The stretch at 68 to 94 forms a coiled coil; the sequence is VLALKKLQKRCDKIEAKFDKEFQALEK. Residues 120-156 form a disordered region; the sequence is TLEGEDDEDDEEEDDEEEEEEEEAAAGATGGPNFAKK. Acidic residues predominate over residues 122-143; that stretch reads EGEDDEDDEEEDDEEEEEEEEA.

The protein belongs to the nucleosome assembly protein (NAP) family.

The protein resides in the nucleus. This chain is Nucleosome assembly protein 1-like 5 (Nap1l5), found in Mus musculus (Mouse).